A 127-amino-acid chain; its full sequence is Fumarate reductase subunit C (127 aa).

A run of 3 helical transmembrane segments spans residues 30–50 (ATILPLIFFTICLLVGLGSLV), 67–87 (IVVALNIVALAGSLFHAQTFF), and 107–127 (VVVLAQWAAVAAITLLVLVIV).

The protein belongs to the FrdC family. As to quaternary structure, part of an enzyme complex containing four subunits: a flavoprotein (FrdA), an iron-sulfur protein (FrdB), and two hydrophobic anchor proteins (FrdC and FrdD).

It localises to the cell inner membrane. Its function is as follows. Anchors the catalytic components of the fumarate reductase complex to the cell membrane, binds quinones. This chain is Fumarate reductase subunit C, found in Aliivibrio salmonicida (strain LFI1238) (Vibrio salmonicida (strain LFI1238)).